The following is a 459-amino-acid chain: RuvB-like helicase 1 (459 aa).

Residue 75–82 (GGPSTGKT) coordinates ATP.

It belongs to the RuvB family. May form heterododecamers with RVB2. Component of the SWR1 chromatin remodeling complex, the INO80 chromatin remodeling complex, and of the R2TP complex.

The protein resides in the nucleus. The enzyme catalyses ATP + H2O = ADP + phosphate + H(+). In terms of biological role, DNA helicase which participates in several chromatin remodeling complexes, including the SWR1 and the INO80 complexes. The SWR1 complex mediates the ATP-dependent exchange of histone H2A for the H2A variant HZT1 leading to transcriptional regulation of selected genes by chromatin remodeling. The INO80 complex remodels chromatin by shifting nucleosomes and is involved in DNA repair. Also involved in pre-rRNA processing. This is RuvB-like helicase 1 (RVB1) from Eremothecium gossypii (strain ATCC 10895 / CBS 109.51 / FGSC 9923 / NRRL Y-1056) (Yeast).